Consider the following 275-residue polypeptide: Elongation factor Ts (275 aa).

Residues 76–79 form an involved in Mg(2+) ion dislocation from EF-Tu region; it reads TDFV.

This sequence belongs to the EF-Ts family.

The protein localises to the cytoplasm. In terms of biological role, associates with the EF-Tu.GDP complex and induces the exchange of GDP to GTP. It remains bound to the aminoacyl-tRNA.EF-Tu.GTP complex up to the GTP hydrolysis stage on the ribosome. This Rhodococcus opacus (strain B4) protein is Elongation factor Ts.